Here is an 807-residue protein sequence, read N- to C-terminus: Glycerol-3-phosphate acyltransferase (807 aa).

The HXXXXD motif signature appears at 308–313; sequence CHRSHM.

Belongs to the GPAT/DAPAT family.

The protein resides in the cell inner membrane. The catalysed reaction is sn-glycerol 3-phosphate + an acyl-CoA = a 1-acyl-sn-glycero-3-phosphate + CoA. The protein operates within phospholipid metabolism; CDP-diacylglycerol biosynthesis; CDP-diacylglycerol from sn-glycerol 3-phosphate: step 1/3. This is Glycerol-3-phosphate acyltransferase from Shewanella baltica (strain OS155 / ATCC BAA-1091).